A 54-amino-acid chain; its full sequence is Preprotein translocase subunit SecG (54 aa).

Topologically, residues 1–31 (MSSGQNSGGLMSSAGLVRYFDAEDRNSIRID) are cytoplasmic. Residues 32–53 (PKTIVAFGVLFGVGVLVLNALA) traverse the membrane as a helical segment. Residue Ile-54 is a topological domain, extracellular.

This sequence belongs to the SEC61-beta family. Component of the protein translocase complex. Heterotrimer consisting of alpha (SecY), beta (SecG) and gamma (SecE) subunits. Can form oligomers of the heterotrimer.

It is found in the cell membrane. In terms of biological role, involved in protein export. The function of the beta subunit is unknown, but it may be involved in stabilization of the trimeric complex. This Haloquadratum walsbyi (strain DSM 16790 / HBSQ001) protein is Preprotein translocase subunit SecG.